Consider the following 86-residue polypeptide: Large ribosomal subunit protein bL27 (86 aa).

The segment at 1 to 24 (MAHKKAGGSSRNGRDSEGRRLGVK) is disordered.

The protein belongs to the bacterial ribosomal protein bL27 family.

The chain is Large ribosomal subunit protein bL27 from Magnetococcus marinus (strain ATCC BAA-1437 / JCM 17883 / MC-1).